A 156-amino-acid chain; its full sequence is uncharacterized protein (156 aa).

It localises to the mitochondrion. This is an uncharacterized protein from Paramecium tetraurelia.